Here is a 481-residue protein sequence, read N- to C-terminus: E3 ubiquitin-protein ligase makorin-1 (481 aa).

3 consecutive C3H1-type zinc fingers follow at residues Trp55 to Ser82, Ser84 to Pro111, and Glu208 to Ser235. The interval Cys236–His263 is makorin-type Cys-His. The RING-type zinc finger occupies Cys281–Arg335. A C3H1-type 4 zinc finger spans residues Ala364 to Pro393.

In terms of assembly, interacts with p53/TP53 and CDKN1A. Interacts with TERT, modulating telomere length homeostasis. Auto-ubiquitinated; which leads to proteasomal degradation. Highly expressed in embryo, in specific cell types of the central nervous system, in brain with the strongest levels of expression in the mantle layers and in testis. Moderate to low levels in somatic tissues.

The catalysed reaction is S-ubiquitinyl-[E2 ubiquitin-conjugating enzyme]-L-cysteine + [acceptor protein]-L-lysine = [E2 ubiquitin-conjugating enzyme]-L-cysteine + N(6)-ubiquitinyl-[acceptor protein]-L-lysine.. Its pathway is protein modification; protein ubiquitination. Its function is as follows. E3 ubiquitin ligase catalyzing the covalent attachment of ubiquitin moieties onto substrate proteins. These substrates include FILIP1, p53/TP53, CDKN1A and TERT. Keeps cells alive by suppressing p53/TP53 under normal conditions, but stimulates apoptosis by repressing CDKN1A under stress conditions. Acts as a negative regulator of telomerase. Has negative and positive effects on RNA polymerase II-dependent transcription. This Mus musculus (Mouse) protein is E3 ubiquitin-protein ligase makorin-1 (Mkrn1).